We begin with the raw amino-acid sequence, 207 residues long: uncharacterized protein (207 aa).

S-adenosyl-L-methionine-binding residues include Gly-51 and Asp-72.

It belongs to the methyltransferase superfamily. YrrT family.

In terms of biological role, could be a S-adenosyl-L-methionine-dependent methyltransferase. This is an uncharacterized protein from Staphylococcus carnosus (strain TM300).